We begin with the raw amino-acid sequence, 484 residues long: Major extracellular endoglucanase (484 aa).

A signal peptide spans 1-25 (MSIFRTASTLALATALALAAGPAFS). Glutamate 182 functions as the Proton donor in the catalytic mechanism. Glutamate 303 (nucleophile) is an active-site residue. The disordered stretch occupies residues 370–402 (GTAGNTTPTPTPTPTPTPTPTPTPTPTPTPGTS). The segment at 375 to 399 (TTPTPTPTPTPTPTPTPTPTPTPTP) is thr-Pro repeats ('hinge') (Pro-Thr box). Residues 378 to 398 (TPTPTPTPTPTPTPTPTPTPT) show a composition bias toward pro residues. The region spanning 395–484 (PTPTPGTSTF…TAEFGFCAAS (90 aa)) is the CBM2 domain.

This sequence belongs to the glycosyl hydrolase 5 (cellulase A) family.

The enzyme catalyses Endohydrolysis of (1-&gt;4)-beta-D-glucosidic linkages in cellulose, lichenin and cereal beta-D-glucans.. This is Major extracellular endoglucanase (engXCA) from Xanthomonas campestris pv. campestris (strain ATCC 33913 / DSM 3586 / NCPPB 528 / LMG 568 / P 25).